Here is a 281-residue protein sequence, read N- to C-terminus: tRNA uridine(34) hydroxylase (281 aa).

The 94-residue stretch at 121-214 folds into the Rhodanese domain; it reads SQPDVLVIDT…YLEKTHNKSG (94 aa). Residue Cys174 is the Cysteine persulfide intermediate of the active site.

This sequence belongs to the TrhO family.

The enzyme catalyses uridine(34) in tRNA + AH2 + O2 = 5-hydroxyuridine(34) in tRNA + A + H2O. In terms of biological role, catalyzes oxygen-dependent 5-hydroxyuridine (ho5U) modification at position 34 in tRNAs. This chain is tRNA uridine(34) hydroxylase, found in Wolbachia pipientis subsp. Culex pipiens (strain wPip).